The primary structure comprises 142 residues: Transcription antitermination protein NusB (142 aa).

The protein belongs to the NusB family.

Involved in transcription antitermination. Required for transcription of ribosomal RNA (rRNA) genes. Binds specifically to the boxA antiterminator sequence of the ribosomal RNA (rrn) operons. This is Transcription antitermination protein NusB from Anaeromyxobacter dehalogenans (strain 2CP-1 / ATCC BAA-258).